Consider the following 301-residue polypeptide: MGPYLSQPNKNKTTTSGEGKSIIFAASEMQGWRNTMEDAHIHVCDLQQDLSIFGVFDGHGGKEVAQFVEKHFIEELQKNKNFKDQKFEDALRETFLKMDELLLTPEGQKEIIQIKGGDDEASYAGCTANVALFHKNVLYVANAGDSRSVLCRNNTNYDMSVDHKPDNYEEKSRIERAGGFVSDGRVNGNLNLSRALGDLEYKRDSKLRSNEQLIIALPDIKKVELNQTDKFLLMGCDGVFETLDHQDLLKFINQKLGNQQITPQLLGRVAEDLLDNLIAPDTSAGTGCDNMTTLIIYLKGK.

Residues 1 to 18 (MGPYLSQPNKNKTTTSGE) show a composition bias toward polar residues. Residues 1–20 (MGPYLSQPNKNKTTTSGEGK) are disordered. One can recognise a PPM-type phosphatase domain in the interval 23 to 298 (IFAASEMQGW…DNMTTLIIYL (276 aa)). Residues Asp-57, Gly-58, Asp-237, and Asp-289 each coordinate Mn(2+).

Belongs to the PP2C family. Mg(2+) serves as cofactor. It depends on Mn(2+) as a cofactor.

Its subcellular location is the membrane. The enzyme catalyses O-phospho-L-seryl-[protein] + H2O = L-seryl-[protein] + phosphate. It carries out the reaction O-phospho-L-threonyl-[protein] + H2O = L-threonyl-[protein] + phosphate. Enzyme with a broad specificity. This Paramecium tetraurelia protein is Probable protein phosphatase 2C 4.